A 332-amino-acid chain; its full sequence is uncharacterized protein (332 aa).

Positions 159–256 (PLEISGRGGN…PRPHPWGPGP (98 aa)) are disordered. The segment covering 201-231 (RPPSPRPPSPRPPHPRPPSPRPPHPRPPSPR) has biased composition (pro residues).

Its subcellular location is the virion. This is an uncharacterized protein from Acanthamoeba polyphaga (Amoeba).